Here is a 131-residue protein sequence, read N- to C-terminus: Sec-independent protein translocase protein TatB (131 aa).

The chain crosses the membrane as a helical span at residues 1 to 21 (MFDISFAELVVVGIVALIVIG). Polar residues-rich tracts occupy residues 71–93 (NSFE…TQSA) and 111–131 (PVNT…QPNS). The interval 71–131 (NSFENSVRSE…APAEPRQPNS (61 aa)) is disordered.

It belongs to the TatB family. The Tat system comprises two distinct complexes: a TatABC complex, containing multiple copies of TatA, TatB and TatC subunits, and a separate TatA complex, containing only TatA subunits. Substrates initially bind to the TatABC complex, which probably triggers association of the separate TatA complex to form the active translocon.

It localises to the cell inner membrane. Its function is as follows. Part of the twin-arginine translocation (Tat) system that transports large folded proteins containing a characteristic twin-arginine motif in their signal peptide across membranes. Together with TatC, TatB is part of a receptor directly interacting with Tat signal peptides. TatB may form an oligomeric binding site that transiently accommodates folded Tat precursor proteins before their translocation. The protein is Sec-independent protein translocase protein TatB of Nitrosomonas europaea (strain ATCC 19718 / CIP 103999 / KCTC 2705 / NBRC 14298).